Here is a 452-residue protein sequence, read N- to C-terminus: Probable cysteine protease RD21C (452 aa).

The N-terminal stretch at 1–29 (MATSIKSITLALLIFSVLLISLSLGSVTA) is a signal peptide. Residues 30–128 (TETTRNEAEA…EKYLYKVGDS (99 aa)) constitute a propeptide, activation peptide. Asn-82 is a glycosylation site (N-linked (GlcNAc...) asparagine). Cystine bridges form between Cys-150-Cys-192, Cys-184-Cys-226, Cys-284-Cys-335, Cys-363-Cys-375, and Cys-369-Cys-390. Residue Cys-153 is part of the active site. Residues His-290 and Asn-310 contribute to the active site. The propeptide at 346 to 452 (KSSGSNPPKP…KSTNMLVGSA (107 aa)) is removed in mature form.

It belongs to the peptidase C1 family. Interacts with WSCP.

Probable thiol protease. The polypeptide is Probable cysteine protease RD21C (Arabidopsis thaliana (Mouse-ear cress)).